A 66-amino-acid chain; its full sequence is Putative ankyrin repeat protein RF_pd14 (66 aa).

The ANK repeat unit spans residues 14–66; the sequence is KLNQKLMRAAATGDIEAVQKLVLRGADIYCRDHQGDTALSLAAGSGYLDILDI.

The polypeptide is Putative ankyrin repeat protein RF_pd14 (Rickettsia felis (strain ATCC VR-1525 / URRWXCal2) (Rickettsia azadi)).